Consider the following 614-residue polypeptide: Maltose permease MAL61 (614 aa).

A disordered region spans residues 1 to 48; it reads MKGLSSLINRKKDRNDSHLDEIENGVNATEFNSIEMEEQGKKSDFDLS. The Cytoplasmic portion of the chain corresponds to 1 to 108; the sequence is MKGLSSLINR…AAAWSLLVST (108 aa). A compositionally biased stretch (basic and acidic residues) spans 38 to 48; it reads EQGKKSDFDLS. Residues 109–129 form a helical membrane-spanning segment; sequence TLIQEGYDTAILGAFYALPVF. Topologically, residues 130 to 144 are extracellular; it reads QKKYGSLNSNTGDYE. A helical membrane pass occupies residues 145–165; sequence ISVSWQIGLCLCYMAGEIVGL. Topologically, residues 166-180 are cytoplasmic; sequence QVTGPSVDYMGNRYT. Residues 181-201 traverse the membrane as a helical segment; the sequence is LIMALFFLAAFIFILYFCKSL. Residue Gly-202 is a topological domain, extracellular. Residues 203 to 223 form a helical membrane-spanning segment; it reads MIAVGQALCGMPWGCFQCLTV. Residues 224–236 lie on the Cytoplasmic side of the membrane; it reads SYASEICPLALRY. A helical membrane pass occupies residues 237–257; it reads YLTTYSNLCWTFGQLFAAGIM. Topologically, residues 258-272 are extracellular; the sequence is KNSQNKYANSELGYK. A helical transmembrane segment spans residues 273 to 293; the sequence is LPFALQWIWPLPLAVGIFLAP. The Cytoplasmic segment spans residues 294 to 364; sequence ESPWWLVKKG…KDGINRRRTR (71 aa). The helical transmembrane segment at 365 to 385 threads the bilayer; sequence IACLCWIGQCSCGASLIGYST. The Extracellular portion of the chain corresponds to 386–398; the sequence is YFYEKAGVSTDTA. The helical transmembrane segment at 399–419 threads the bilayer; sequence FTFSIIQYCLGIAATFVSWWA. Residues 420–427 lie on the Cytoplasmic side of the membrane; that stretch reads SKYCGRFD. The chain crosses the membrane as a helical span at residues 428–448; that stretch reads LYAFGLAFQAIMFFIIGGLGC. At 449–460 the chain is on the extracellular side; that stretch reads SDTHGAKMGSGA. Residues 461 to 481 form a helical membrane-spanning segment; sequence LLMVVAFFYNLGIAPVVFCLV. The Cytoplasmic portion of the chain corresponds to 482 to 493; the sequence is SEMPSSRLRTKT. The helical transmembrane segment at 494-514 threads the bilayer; it reads IILARNAYNVIQVVVTVLIMY. The Extracellular portion of the chain corresponds to 515 to 526; that stretch reads QLNSEKWNWGAK. The helical transmembrane segment at 527–547 threads the bilayer; it reads SGFFWGGFCLATLAWAVVDLP. Topologically, residues 548-614 are cytoplasmic; that stretch reads ETAGRTFIEI…GRSTPSVVNK (67 aa). The tract at residues 594-614 is disordered; sequence KEDLETSVVDEGRSTPSVVNK.

Belongs to the major facilitator superfamily. Sugar transporter (TC 2.A.1.1) family.

It localises to the membrane. Functionally, transporter for maltose. This Saccharomyces cerevisiae (Baker's yeast) protein is Maltose permease MAL61 (MAL61).